The following is a 101-amino-acid chain: Small ribosomal subunit protein uS14 (101 aa).

A disordered region spans residues 46–72; it reads FELNRQPRDASPVRVRNRDSRDGRPRG. The segment covering 61 to 70 has biased composition (basic and acidic residues); that stretch reads RNRDSRDGRP.

It belongs to the universal ribosomal protein uS14 family. As to quaternary structure, part of the 30S ribosomal subunit. Contacts proteins S3 and S10.

In terms of biological role, binds 16S rRNA, required for the assembly of 30S particles and may also be responsible for determining the conformation of the 16S rRNA at the A site. The chain is Small ribosomal subunit protein uS14 from Corynebacterium diphtheriae (strain ATCC 700971 / NCTC 13129 / Biotype gravis).